We begin with the raw amino-acid sequence, 602 residues long: Myotubularin (602 aa).

The disordered stretch occupies residues 1 to 32; it reads MASNSTPKYNSNSLENSLRRSPGDGMNHEQND. Basic and acidic residues predominate over residues 17–31; sequence SLRRSPGDGMNHEQN. The region spanning 28–96 is the GRAM domain; that stretch reads HEQNDEIPCL…GVIARIEKMG (69 aa). Residues 162–537 enclose the Myotubularin phosphatase domain; it reads GWAVYDAMTE…RHLELWVNYY (376 aa). Positions 287, 312, and 313 each coordinate a 1,2-diacyl-sn-glycero-3-phospho-(1D-myo-inositol-3,5-bisphosphate). Positions 287, 312, and 313 each coordinate a 1,2-diacyl-sn-glycero-3-phospho-(1D-myo-inositol-3-phosphate). Cys-374 (phosphocysteine intermediate) is an active-site residue. 8 residues coordinate a 1,2-diacyl-sn-glycero-3-phospho-(1D-myo-inositol-3,5-bisphosphate): Ser-375, Asp-376, Gly-377, Trp-378, Asp-379, Arg-380, Lys-416, and Arg-420. A 1,2-diacyl-sn-glycero-3-phospho-(1D-myo-inositol-3-phosphate) contacts are provided by Ser-375, Asp-376, Gly-377, Trp-378, Asp-379, and Arg-380. Arg-420 contacts a 1,2-diacyl-sn-glycero-3-phospho-(1D-myo-inositol-3-phosphate). Positions 574–602 are disordered; it reads QITNSPKMNSSTTSPSSPSQIMPQVHTPF. Residues 583–592 show a composition bias toward low complexity; it reads SSTTSPSSPS.

Belongs to the protein-tyrosine phosphatase family. Non-receptor class myotubularin subfamily.

The protein localises to the cytoplasm. Its subcellular location is the cell membrane. The protein resides in the cell projection. It localises to the filopodium. It is found in the ruffle. The protein localises to the late endosome. Its subcellular location is the myofibril. The protein resides in the sarcomere. It carries out the reaction a 1,2-diacyl-sn-glycero-3-phospho-(1D-myo-inositol-3-phosphate) + H2O = a 1,2-diacyl-sn-glycero-3-phospho-(1D-myo-inositol) + phosphate. The enzyme catalyses a 1,2-diacyl-sn-glycero-3-phospho-(1D-myo-inositol-3,5-bisphosphate) + H2O = a 1,2-diacyl-sn-glycero-3-phospho-(1D-myo-inositol-5-phosphate) + phosphate. It catalyses the reaction 1,2-dioctanoyl-sn-glycero-3-phospho-(1-D-myo-inositol-3-phosphate) + H2O = 1,2-dioctanoyl-sn-glycero-3-phospho-(1D-myo-inositol) + phosphate. The catalysed reaction is 1,2-dioctanoyl-sn-glycero-3-phospho-(1D-myo-inositol-3,5-bisphosphate) + H2O = 1,2-dioctanoyl-sn-glycero-3-phospho-(1D-myo-inositol-5-phosphate) + phosphate. It carries out the reaction 1,2-dihexadecanoyl-sn-glycero-3-phospho-(1D-myo-inositol-3,5-phosphate) + H2O = 1,2-dihexadecanoyl-sn-glycero-3-phospho-(1D-myo-inositol-5-phosphate) + phosphate. Lipid phosphatase which dephosphorylates phosphatidylinositol 3-monophosphate (PI3P) and phosphatidylinositol 3,5-bisphosphate (PI(3,5)P2). In Xenopus tropicalis (Western clawed frog), this protein is Myotubularin (mtm1).